Here is a 465-residue protein sequence, read N- to C-terminus: Myosin-6 (465 aa).

A Myosin motor domain is found at isoleucine 1 to proline 35. A coiled-coil region spans residues leucine 36–arginine 465. Residues serine 285 and serine 334 each carry the phosphoserine modification. Position 456 is a phosphotyrosine (tyrosine 456).

As to quaternary structure, muscle myosin is a hexameric protein that consists of 2 heavy chain subunits (MHC), 2 alkali light chain subunits (MLC) and 2 regulatory light chain subunits (MLC-2).

Its subcellular location is the cytoplasm. The protein localises to the myofibril. In terms of biological role, muscle contraction. In Oryctolagus cuniculus (Rabbit), this protein is Myosin-6 (MYH6).